The sequence spans 83 residues: Hainantoxin-III 6 (83 aa).

The N-terminal stretch at M1–A21 is a signal peptide. A propeptide spanning residues S22–R48 is cleaved from the precursor. 3 cysteine pairs are disulfide-bonded: C50-C65, C57-C70, and C64-C77. L81 carries the post-translational modification Leucine amide.

This sequence belongs to the neurotoxin 10 (Hwtx-1) family. 15 (Hntx-3) subfamily. Monomer. In terms of tissue distribution, expressed by the venom gland.

It localises to the secreted. Its function is as follows. Selective antagonist of neuronal tetrodotoxin (TTX)-sensitive voltage-gated sodium channels (IC(50)=1270 nM on Nav1.1/SCN1A, 270 nM on Nav1.2/SCN2A, 491 nM on Nav1.3/SCN3A and 232 nM on Nav1.7/SCN9A). This toxin suppress Nav1.7 current amplitude without significantly altering the activation, inactivation, and repriming kinetics. Short extreme depolarizations partially activate the toxin-bound channel, indicating voltage-dependent inhibition of this toxin. This toxin increases the deactivation of the Nav1.7 current after extreme depolarizations. The toxin-Nav1.7 complex is gradually dissociated upon prolonged strong depolarizations in a voltage-dependent manner, and the unbound toxin rebinds to Nav1.7 after a long repolarization. Moreover, analysis of chimeric channels showed that the DIIS3-S4 linker is critical for toxin binding to Nav1.7. These data are consistent with this toxin interacting with Nav1.7 site 4 and trapping the domain II voltage sensor in the closed state. The protein is Hainantoxin-III 6 of Cyriopagopus hainanus (Chinese bird spider).